The chain runs to 151 residues: 3-hydroxyacyl-[acyl-carrier-protein] dehydratase FabZ (151 aa).

His49 is a catalytic residue.

Belongs to the thioester dehydratase family. FabZ subfamily.

The protein resides in the cytoplasm. The enzyme catalyses a (3R)-hydroxyacyl-[ACP] = a (2E)-enoyl-[ACP] + H2O. Functionally, involved in unsaturated fatty acids biosynthesis. Catalyzes the dehydration of short chain beta-hydroxyacyl-ACPs and long chain saturated and unsaturated beta-hydroxyacyl-ACPs. The protein is 3-hydroxyacyl-[acyl-carrier-protein] dehydratase FabZ of Wolinella succinogenes (strain ATCC 29543 / DSM 1740 / CCUG 13145 / JCM 31913 / LMG 7466 / NCTC 11488 / FDC 602W) (Vibrio succinogenes).